A 137-amino-acid polypeptide reads, in one-letter code: Large ribosomal subunit protein uL16 (137 aa).

This sequence belongs to the universal ribosomal protein uL16 family. As to quaternary structure, part of the 50S ribosomal subunit.

Functionally, binds 23S rRNA and is also seen to make contacts with the A and possibly P site tRNAs. The polypeptide is Large ribosomal subunit protein uL16 (Mesoplasma florum (strain ATCC 33453 / NBRC 100688 / NCTC 11704 / L1) (Acholeplasma florum)).